Consider the following 187-residue polypeptide: CASP-like protein 2 (187 aa).

The Cytoplasmic portion of the chain corresponds to 1–24; that stretch reads MKVSAVETGEISQVSAPRKGMIRG. A helical membrane pass occupies residues 25–45; it reads LSIMDFILRIVAAIGTLGSAL. Over 46 to 72 the chain is Extracellular; the sequence is STGTTRETLPFTTQFVKFRAVFDDLPT. Residues 73–93 traverse the membrane as a helical segment; it reads FVFFVTSNSIVCGYLVLSLAL. The Cytoplasmic segment spans residues 94–108; it reads SFFHIIRRSSAAKSR. A helical membrane pass occupies residues 109 to 129; the sequence is ILLVFLDTVMFGLLTTGAAAA. Residues 130–163 are Extracellular-facing; the sequence is GTIVYVSHYGNVNANWFPFCGQYNHFCERISGSL. Residues 164-184 traverse the membrane as a helical segment; it reads IGSFIAVVIFMIIILMSAVSI. The Cytoplasmic segment spans residues 185-187; the sequence is SKH.

It belongs to the Casparian strip membrane proteins (CASP) family. As to quaternary structure, homodimer and heterodimers.

It is found in the cell membrane. The chain is CASP-like protein 2 from Lotus japonicus (Lotus corniculatus var. japonicus).